We begin with the raw amino-acid sequence, 670 residues long: Probable plastid-lipid-associated protein 14, chloroplastic (670 aa).

The N-terminal 52 residues, 1-52 (MALCGVCSTPNLPNLQVFRSVRNSSIGYKRNHSLWQLRSSSFRAKSVIFHCS), are a transit peptide targeting the chloroplast. One can recognise a Protein kinase domain in the interval 88–399 (FRILDRVSIG…CLDALKHPFL (312 aa)).

It belongs to the PAP/fibrillin family. Post-translationally, not autophosphorylated. In terms of tissue distribution, expressed in roots.

It is found in the plastid. The protein localises to the chloroplast. Its function is as follows. Directly regulated by DOF3.6/OBP3; unknown function. The chain is Probable plastid-lipid-associated protein 14, chloroplastic (PAP14) from Arabidopsis thaliana (Mouse-ear cress).